The sequence spans 417 residues: Gamma-glutamyl phosphate reductase (417 aa).

It belongs to the gamma-glutamyl phosphate reductase family.

The protein resides in the cytoplasm. It catalyses the reaction L-glutamate 5-semialdehyde + phosphate + NADP(+) = L-glutamyl 5-phosphate + NADPH + H(+). The protein operates within amino-acid biosynthesis; L-proline biosynthesis; L-glutamate 5-semialdehyde from L-glutamate: step 2/2. Catalyzes the NADPH-dependent reduction of L-glutamate 5-phosphate into L-glutamate 5-semialdehyde and phosphate. The product spontaneously undergoes cyclization to form 1-pyrroline-5-carboxylate. The protein is Gamma-glutamyl phosphate reductase of Escherichia coli (strain K12 / MC4100 / BW2952).